Consider the following 338-residue polypeptide: Isopenicillin N synthase (338 aa).

Residues Arg89, Tyr93, Ser185, and Tyr191 each coordinate isopenicillin N. 6 residues coordinate N-[(5S)-5-amino-5-carboxypentanoyl]-L-cysteinyl-D-valine: Arg89, Tyr93, Ser185, Tyr191, His216, and Asp218. One can recognise a Fe2OG dioxygenase domain in the interval 182-290 (TLSSVVLIRY…RQSLPFFVNL (109 aa)). Fe(2+) contacts are provided by His216, Asp218, and His272. Arg281 is a 2-oxoglutarate binding site. Residue Ser283 participates in isopenicillin N binding. Ser283 serves as a coordination point for N-[(5S)-5-amino-5-carboxypentanoyl]-L-cysteinyl-D-valine.

This sequence belongs to the iron/ascorbate-dependent oxidoreductase family. In terms of assembly, monomer. Fe(2+) serves as cofactor.

It localises to the cytoplasm. It is found in the cytosol. The catalysed reaction is N-[(5S)-5-amino-5-carboxypentanoyl]-L-cysteinyl-D-valine + O2 = isopenicillin N + 2 H2O. It participates in antibiotic biosynthesis; penicillin G biosynthesis; penicillin G from L-alpha-aminoadipate and L-cysteine and L-valine: step 2/3. Its function is as follows. Isopenicillin N synthase; part of the gene cluster that mediates the biosynthesis of penicillin, the world's most important antibiotic. IpnA catalyzes the cyclization of the tripeptide N-[(5S)-5-amino-5-carboxypentanoyl]-L-cysteinyl-D-valine (LLD-ACV or ACV) to form isopenicillin N (IPN) that contains the beta-lactam nucleus. The penicillin biosynthesis occurs via 3 enzymatic steps, the first corresponding to the production of the tripeptide N-[(5S)-5-amino-5-carboxypentanoyl]-L-cysteinyl-D-valine (LLD-ACV or ACV) by the NRPS pcbAB. The tripeptide ACV is then cyclized to isopenicillin N (IPN) by the isopenicillin N synthase pcbC that forms the beta-lactam nucleus. Finally, the alpha-aminoadipyl side chain is exchanged for phenylacetic acid by the isopenicillin N acyltransferase penDE to yield penicillin in the peroxisomal matrix. The polypeptide is Isopenicillin N synthase (PCBC) (Hapsidospora chrysogena (Acremonium chrysogenum)).